Consider the following 75-residue polypeptide: Mating pheromone Er-10 (75 aa).

The first 19 residues, methionine 1 to alanine 19, serve as a signal peptide directing secretion. Positions phenylalanine 20–arginine 37 are excised as a propeptide. Cystine bridges form between cysteine 40–cysteine 56, cysteine 47–cysteine 74, and cysteine 52–cysteine 64.

As to quaternary structure, homodimer.

It is found in the secreted. Mating ciliate pheromones (or gamones) are diffusible extracellular communication signals that distinguish different intraspecific classes of cells commonly referred to as 'mating types'. They prepare the latter for conjugation by changing their cell surface properties. This chain is Mating pheromone Er-10 (MAT10), found in Euplotes raikovi.